The chain runs to 306 residues: Ornithine carbamoyltransferase (306 aa).

Carbamoyl phosphate is bound by residues 46–49 (STRT), Gln73, Arg97, and 124–127 (HPTQ). Residues Asn156, Asp220, and 224–225 (SM) contribute to the L-ornithine site. Carbamoyl phosphate contacts are provided by residues 260–261 (CL) and Arg288.

This sequence belongs to the aspartate/ornithine carbamoyltransferase superfamily. OTCase family.

The protein localises to the cytoplasm. The catalysed reaction is carbamoyl phosphate + L-ornithine = L-citrulline + phosphate + H(+). It functions in the pathway amino-acid degradation; L-arginine degradation via ADI pathway; carbamoyl phosphate from L-arginine: step 2/2. Functionally, reversibly catalyzes the transfer of the carbamoyl group from carbamoyl phosphate (CP) to the N(epsilon) atom of ornithine (ORN) to produce L-citrulline. The protein is Ornithine carbamoyltransferase of Campylobacter jejuni subsp. jejuni serotype O:6 (strain 81116 / NCTC 11828).